The chain runs to 305 residues: tRNA dimethylallyltransferase 2 (305 aa).

Residue 14–21 (GPTASGKT) participates in ATP binding. A substrate-binding site is contributed by 16-21 (TASGKT). The interval 39–42 (DSRQ) is interaction with substrate tRNA.

It belongs to the IPP transferase family. In terms of assembly, monomer. Mg(2+) serves as cofactor.

It carries out the reaction adenosine(37) in tRNA + dimethylallyl diphosphate = N(6)-dimethylallyladenosine(37) in tRNA + diphosphate. Catalyzes the transfer of a dimethylallyl group onto the adenine at position 37 in tRNAs that read codons beginning with uridine, leading to the formation of N6-(dimethylallyl)adenosine (i(6)A). In Trichlorobacter lovleyi (strain ATCC BAA-1151 / DSM 17278 / SZ) (Geobacter lovleyi), this protein is tRNA dimethylallyltransferase 2.